The primary structure comprises 117 residues: Large ribosomal subunit protein bL19 (117 aa).

It belongs to the bacterial ribosomal protein bL19 family.

Functionally, this protein is located at the 30S-50S ribosomal subunit interface and may play a role in the structure and function of the aminoacyl-tRNA binding site. This chain is Large ribosomal subunit protein bL19, found in Shewanella frigidimarina (strain NCIMB 400).